The primary structure comprises 462 residues: tRNA-2-methylthio-N(6)-dimethylallyladenosine synthase (462 aa).

One can recognise an MTTase N-terminal domain in the interval 1 to 116; it reads MKLFIQTLGC…ITQVLERPKA (116 aa). Residues Cys-10, Cys-47, Cys-79, Cys-148, Cys-152, and Cys-155 each coordinate [4Fe-4S] cluster. The 237-residue stretch at 134–370 folds into the Radical SAM core domain; sequence QGMGIKAHLN…NLHKEILSKK (237 aa). The 65-residue stretch at 372 to 436 folds into the TRAM domain; the sequence is QLEIGRIHNV…GGGLMGRFIN (65 aa).

Belongs to the methylthiotransferase family. MiaB subfamily. As to quaternary structure, monomer. The cofactor is [4Fe-4S] cluster.

It is found in the cytoplasm. The enzyme catalyses N(6)-dimethylallyladenosine(37) in tRNA + (sulfur carrier)-SH + AH2 + 2 S-adenosyl-L-methionine = 2-methylsulfanyl-N(6)-dimethylallyladenosine(37) in tRNA + (sulfur carrier)-H + 5'-deoxyadenosine + L-methionine + A + S-adenosyl-L-homocysteine + 2 H(+). Catalyzes the methylthiolation of N6-(dimethylallyl)adenosine (i(6)A), leading to the formation of 2-methylthio-N6-(dimethylallyl)adenosine (ms(2)i(6)A) at position 37 in tRNAs that read codons beginning with uridine. This is tRNA-2-methylthio-N(6)-dimethylallyladenosine synthase from Helicobacter hepaticus (strain ATCC 51449 / 3B1).